A 926-amino-acid chain; its full sequence is Probable Xaa-Pro aminopeptidase PTT_10145 (926 aa).

Residues Asp-274, Asp-285, Glu-435, and Glu-476 each coordinate Mn(2+). Disordered regions lie at residues 505–538 (GNPG…PGIS), 595–615 (KRDS…LSPV), 668–696 (SSST…EEKH), 711–741 (IGQS…KAAT), and 865–926 (MPVL…FLTR). Over residues 506–515 (NPGTTEILNP) the composition is skewed to polar residues. Composition is skewed to basic and acidic residues over residues 685–696 (SRQKSHTVEEKH) and 719–730 (GPEERRRKAQSD). The span at 887-897 (NNATNKRSMID) shows a compositional bias: polar residues. The span at 900 to 915 (PAERRTRPERPERPAR) shows a compositional bias: basic and acidic residues.

This sequence belongs to the peptidase M24B family. The cofactor is Mn(2+).

It catalyses the reaction Release of any N-terminal amino acid, including proline, that is linked to proline, even from a dipeptide or tripeptide.. Catalyzes the removal of a penultimate prolyl residue from the N-termini of peptides. The sequence is that of Probable Xaa-Pro aminopeptidase PTT_10145 from Pyrenophora teres f. teres (strain 0-1) (Barley net blotch fungus).